Consider the following 568-residue polypeptide: Proline--tRNA ligase (568 aa).

This sequence belongs to the class-II aminoacyl-tRNA synthetase family. ProS type 1 subfamily. Homodimer.

It is found in the cytoplasm. It catalyses the reaction tRNA(Pro) + L-proline + ATP = L-prolyl-tRNA(Pro) + AMP + diphosphate. Its function is as follows. Catalyzes the attachment of proline to tRNA(Pro) in a two-step reaction: proline is first activated by ATP to form Pro-AMP and then transferred to the acceptor end of tRNA(Pro). As ProRS can inadvertently accommodate and process non-cognate amino acids such as alanine and cysteine, to avoid such errors it has two additional distinct editing activities against alanine. One activity is designated as 'pretransfer' editing and involves the tRNA(Pro)-independent hydrolysis of activated Ala-AMP. The other activity is designated 'posttransfer' editing and involves deacylation of mischarged Ala-tRNA(Pro). The misacylated Cys-tRNA(Pro) is not edited by ProRS. This is Proline--tRNA ligase from Listeria welshimeri serovar 6b (strain ATCC 35897 / DSM 20650 / CCUG 15529 / CIP 8149 / NCTC 11857 / SLCC 5334 / V8).